A 119-amino-acid chain; its full sequence is Putative arsenical resistance operon repressor ArsR2 (119 aa).

An HTH arsR-type domain is found at 24-119; the sequence is VDSDAMATDL…TLDDLRGNHE (96 aa). The segment at residues 60 to 83 is a DNA-binding region (H-T-H motif); it reads VCDLEATVGVSQSAVSQALSRLYT.

Functionally, transcriptional repressor for the arsR2M operon. This chain is Putative arsenical resistance operon repressor ArsR2 (arsR2), found in Halobacterium salinarum (strain ATCC 700922 / JCM 11081 / NRC-1) (Halobacterium halobium).